A 711-amino-acid chain; its full sequence is MHLKPYWKLQKKEHPPEVSRETQRTPMNHQKAVNDETCKASHITSSVFPSASLGKASSRKPFGILSPNVLCSMSGKSPVESSLNVKTKKNAPSATIHQGEEEGPLDIWAVVKPGNTKEKIAFFASHQCSNRIGSMKIKSSWDIDGRATKRRKKSGDLKKAKVQVERMREVNSRCYQPEPFACGIEHCSVHYVSDSGDGVYAGRPLSVIQMVAFLEQRASALLASCSKNCTNSPAIVRFSGQSRGVPAVSESYSAPGACEEPTERGNLEVGEPQSEPVRVLDMVAKLESECLKRQGQREPGSLSRNNSFRRNVGRVLLANSTQADEGKTKKGVLEAPDTQVNPVGSVSVDCGPSRADRCSPKEDQAWDGASQDCPPLPAGVSFHIDSAELEPGSQTAVKNSNRYDVEMTDELVGLPFSSHTYSQASELPTDAVDCMSRELVSLTSRNPDQRKESLCISITVSKVDKDQPSILNSCEDPVPGMLFFLPPGQHLSDYSQLNESTTKESSEASQLEDAAGGDSASEEKSGSAEPFVLPASSVESTLPVLEASSWKKQVSHDFLETRFKIQQLLEPQQYMAFLPHHIMVKIFRLLPTKSLVALKCTCCYFKFIIEYYNIRPADSRWVRDPRYREDPCKQCKKKYVKGDVSLCRWHPKPYCQALPYGPGYWMCCHRSQKGFPGCKLGLHDNHWVPACHSFNRAIHKKAKGTEAEEEY.

Disordered regions lie at residues 1-36, 249-271, 337-372, and 494-529; these read MHLK…VNDE, SESY…EVGE, DTQV…ASQD, and YSQL…GSAE. The segment covering 10–23 has biased composition (basic and acidic residues); sequence QKKEHPPEVSRETQ. The span at 354-364 shows a compositional bias: basic and acidic residues; the sequence is RADRCSPKEDQ. Residues 572–624 form the F-box domain; that stretch reads QQYMAFLPHHIMVKIFRLLPTKSLVALKCTCCYFKFIIEYYNIRPADSRWVRD.

In terms of assembly, directly interacts with SKP1 and CUL1.

Functionally, substrate-recognition component of the SCF (SKP1-CUL1-F-box protein)-type E3 ubiquitin ligase complex. The sequence is that of F-box only protein 34 (FBXO34) from Homo sapiens (Human).